We begin with the raw amino-acid sequence, 446 residues long: Probable D-serine dehydratase (446 aa).

K116 carries the N6-(pyridoxal phosphate)lysine modification.

This sequence belongs to the serine/threonine dehydratase family. DsdA subfamily. Pyridoxal 5'-phosphate serves as cofactor.

The catalysed reaction is D-serine = pyruvate + NH4(+). The protein is Probable D-serine dehydratase of Bacillus thuringiensis subsp. konkukian (strain 97-27).